A 267-amino-acid polypeptide reads, in one-letter code: Syntaxin-72 (267 aa).

Residues 1-244 (MPVIDIIFRV…QLVQMRSSRN (244 aa)) are Cytoplasmic-facing. The stretch at 53 to 87 (KAELASTEKNRAAAVAMNAEVRRTKARLAEDVVKL) forms a coiled coil. The 63-residue stretch at 173–235 (EMRRKKQDEG…KNTNVRLKKQ (63 aa)) folds into the t-SNARE coiled-coil homology domain. Residues 245–265 (FCIDIILLCVILGIVSYIYNA) form a helical; Anchor for type IV membrane protein membrane-spanning segment. Topologically, residues 266-267 (LN) are vesicular.

Belongs to the syntaxin family. As to quaternary structure, part of the t-SNARE complex. As to expression, expressed in root, leaf, stem, flower and silique.

Its subcellular location is the membrane. Vesicle trafficking protein that functions in the secretory pathway. The polypeptide is Syntaxin-72 (SYP72) (Arabidopsis thaliana (Mouse-ear cress)).